The primary structure comprises 361 residues: 5-formaminoimidazole-4-carboxamide-1-(beta)-D-ribofuranosyl 5'-monophosphate synthetase (361 aa).

5-amino-1-(5-phospho-beta-D-ribosyl)imidazole-4-carboxamide is bound by residues His27 and Ser94. An ATP-grasp domain is found at 116 to 348 (RAILRWEAER…MGQRIAKEIK (233 aa)). Residues 146–208 (PDEI…ANYC) and Glu230 contribute to the ATP site. A 5-amino-1-(5-phospho-beta-D-ribosyl)imidazole-4-carboxamide-binding site is contributed by Asn258. 2 residues coordinate Mg(2+): Gln297 and Glu310.

This sequence belongs to the phosphohexose mutase family. Mg(2+) serves as cofactor. Requires Mn(2+) as cofactor.

The catalysed reaction is 5-amino-1-(5-phospho-beta-D-ribosyl)imidazole-4-carboxamide + formate + ATP = 5-formamido-1-(5-phospho-D-ribosyl)imidazole-4-carboxamide + ADP + phosphate. It participates in purine metabolism; IMP biosynthesis via de novo pathway; 5-formamido-1-(5-phospho-D-ribosyl)imidazole-4-carboxamide from 5-amino-1-(5-phospho-D-ribosyl)imidazole-4-carboxamide (formate route): step 1/1. Functionally, catalyzes the ATP- and formate-dependent formylation of 5-aminoimidazole-4-carboxamide-1-beta-d-ribofuranosyl 5'-monophosphate (AICAR) to 5-formaminoimidazole-4-carboxamide-1-beta-d-ribofuranosyl 5'-monophosphate (FAICAR) in the absence of folates. In Methanococcus maripaludis (strain DSM 14266 / JCM 13030 / NBRC 101832 / S2 / LL), this protein is 5-formaminoimidazole-4-carboxamide-1-(beta)-D-ribofuranosyl 5'-monophosphate synthetase.